A 484-amino-acid chain; its full sequence is Siroheme synthase 1 (484 aa).

The interval 1–205 (MHHYPIFLKL…GREAEGEAEL (205 aa)) is precorrin-2 dehydrogenase /sirohydrochlorin ferrochelatase. Residues 22–23 (EA) and 43–44 (PV) each bind NAD(+). Serine 130 carries the phosphoserine modification. Positions 220–484 (GEVFLVGAGP…DPCWTGGMRD (265 aa)) are uroporphyrinogen-III C-methyltransferase. Proline 229 serves as a coordination point for S-adenosyl-L-methionine. The active-site Proton acceptor is the aspartate 252. Residue lysine 274 is the Proton donor of the active site. Residues 305–307 (GGD), leucine 310, 335–336 (SA), methionine 387, and alanine 416 each bind S-adenosyl-L-methionine.

This sequence in the N-terminal section; belongs to the precorrin-2 dehydrogenase / sirohydrochlorin ferrochelatase family. The protein in the C-terminal section; belongs to the precorrin methyltransferase family.

It catalyses the reaction uroporphyrinogen III + 2 S-adenosyl-L-methionine = precorrin-2 + 2 S-adenosyl-L-homocysteine + H(+). It carries out the reaction precorrin-2 + NAD(+) = sirohydrochlorin + NADH + 2 H(+). The catalysed reaction is siroheme + 2 H(+) = sirohydrochlorin + Fe(2+). It participates in cofactor biosynthesis; adenosylcobalamin biosynthesis; precorrin-2 from uroporphyrinogen III: step 1/1. It functions in the pathway cofactor biosynthesis; adenosylcobalamin biosynthesis; sirohydrochlorin from precorrin-2: step 1/1. Its pathway is porphyrin-containing compound metabolism; siroheme biosynthesis; precorrin-2 from uroporphyrinogen III: step 1/1. The protein operates within porphyrin-containing compound metabolism; siroheme biosynthesis; siroheme from sirohydrochlorin: step 1/1. It participates in porphyrin-containing compound metabolism; siroheme biosynthesis; sirohydrochlorin from precorrin-2: step 1/1. Its function is as follows. Multifunctional enzyme that catalyzes the SAM-dependent methylations of uroporphyrinogen III at position C-2 and C-7 to form precorrin-2 via precorrin-1. Then it catalyzes the NAD-dependent ring dehydrogenation of precorrin-2 to yield sirohydrochlorin. Finally, it catalyzes the ferrochelation of sirohydrochlorin to yield siroheme. This is Siroheme synthase 1 from Halorhodospira halophila (strain DSM 244 / SL1) (Ectothiorhodospira halophila (strain DSM 244 / SL1)).